A 315-amino-acid chain; its full sequence is MAQFQIECVESNTEESRNHYSKFILEPLERGQGTTVGNALRRVLLSNLEGTAVTAVRIAGVSHEFATVPGVREDVLEIIMRMKEVILKSYSSQAQIGRLLVNGPTTITASHFDLPSEVEVIDPTQYVATIAEGGKLEMEFRIERGKGYRTVERGREEATSLDFLQIDSIFMPVRKVNYSVEEVRADGSIPKDRLLLEVWTNGSISPQEALSSAAGILVDLFNPLKDISLEPTDTNSDIPDDPTAQIPIEELQLSVRAYNCLKRAQVNSVADLLDYTQEDLLEIKNFGQKSAEEVVEALQRRLGITLPQERSSKHS.

Residues 1 to 228 are alpha N-terminal domain (alpha-NTD); it reads MAQFQIECVE…DLFNPLKDIS (228 aa). The alpha C-terminal domain (alpha-CTD) stretch occupies residues 238–315; the sequence is IPDDPTAQIP…LPQERSSKHS (78 aa).

It belongs to the RNA polymerase alpha chain family. In terms of assembly, in cyanobacteria the RNAP catalytic core is composed of 2 alpha, 1 beta, 1 beta', 1 gamma and 1 omega subunit. When a sigma factor is associated with the core the holoenzyme is formed, which can initiate transcription.

The catalysed reaction is RNA(n) + a ribonucleoside 5'-triphosphate = RNA(n+1) + diphosphate. Its function is as follows. DNA-dependent RNA polymerase catalyzes the transcription of DNA into RNA using the four ribonucleoside triphosphates as substrates. This is DNA-directed RNA polymerase subunit alpha from Trichormus variabilis (strain ATCC 29413 / PCC 7937) (Anabaena variabilis).